The primary structure comprises 156 residues: ATP synthase subunit b (156 aa).

A helical membrane pass occupies residues 7–29 (LLGQAIAFFFFVTFCMKYVWPPL).

It belongs to the ATPase B chain family. In terms of assembly, F-type ATPases have 2 components, F(1) - the catalytic core - and F(0) - the membrane proton channel. F(1) has five subunits: alpha(3), beta(3), gamma(1), delta(1), epsilon(1). F(0) has three main subunits: a(1), b(2) and c(10-14). The alpha and beta chains form an alternating ring which encloses part of the gamma chain. F(1) is attached to F(0) by a central stalk formed by the gamma and epsilon chains, while a peripheral stalk is formed by the delta and b chains.

The protein resides in the cell inner membrane. F(1)F(0) ATP synthase produces ATP from ADP in the presence of a proton or sodium gradient. F-type ATPases consist of two structural domains, F(1) containing the extramembraneous catalytic core and F(0) containing the membrane proton channel, linked together by a central stalk and a peripheral stalk. During catalysis, ATP synthesis in the catalytic domain of F(1) is coupled via a rotary mechanism of the central stalk subunits to proton translocation. Its function is as follows. Component of the F(0) channel, it forms part of the peripheral stalk, linking F(1) to F(0). The chain is ATP synthase subunit b from Photobacterium profundum (strain SS9).